A 143-amino-acid chain; its full sequence is Nucleoside diphosphate kinase (143 aa).

ATP contacts are provided by Lys-11, Phe-59, Arg-87, Thr-93, Arg-104, and Asn-114. The active-site Pros-phosphohistidine intermediate is the His-117.

This sequence belongs to the NDK family. As to quaternary structure, homotetramer. Mg(2+) is required as a cofactor.

Its subcellular location is the cytoplasm. It catalyses the reaction a 2'-deoxyribonucleoside 5'-diphosphate + ATP = a 2'-deoxyribonucleoside 5'-triphosphate + ADP. The catalysed reaction is a ribonucleoside 5'-diphosphate + ATP = a ribonucleoside 5'-triphosphate + ADP. Functionally, major role in the synthesis of nucleoside triphosphates other than ATP. The ATP gamma phosphate is transferred to the NDP beta phosphate via a ping-pong mechanism, using a phosphorylated active-site intermediate. The polypeptide is Nucleoside diphosphate kinase (Shewanella sediminis (strain HAW-EB3)).